We begin with the raw amino-acid sequence, 113 residues long: Large ribosomal subunit protein uL22 (113 aa).

It belongs to the universal ribosomal protein uL22 family. As to quaternary structure, part of the 50S ribosomal subunit.

Its function is as follows. This protein binds specifically to 23S rRNA; its binding is stimulated by other ribosomal proteins, e.g. L4, L17, and L20. It is important during the early stages of 50S assembly. It makes multiple contacts with different domains of the 23S rRNA in the assembled 50S subunit and ribosome. Functionally, the globular domain of the protein is located near the polypeptide exit tunnel on the outside of the subunit, while an extended beta-hairpin is found that lines the wall of the exit tunnel in the center of the 70S ribosome. The chain is Large ribosomal subunit protein uL22 from Neorickettsia sennetsu (strain ATCC VR-367 / Miyayama) (Ehrlichia sennetsu).